A 594-amino-acid chain; its full sequence is Cationic amino acid transporter 1 (594 aa).

An N-acetylalanine modification is found at Ala-2. The Cytoplasmic portion of the chain corresponds to 2–78 (ASGGGDDGLR…EMKKTLTWWD (77 aa)). A helical membrane pass occupies residues 79-99 (LMWFGIGAVIGSGIFVLTGLE). Over 100 to 104 (ARNHS) the chain is Extracellular. Asn-102 is a glycosylation site (N-linked (GlcNAc...) asparagine). A helical membrane pass occupies residues 105–125 (GPAVVLSYVVSGVSAMLSVFC). Over 126–149 (YTEFAVEIPVAGGSFAYLRVELGD) the chain is Cytoplasmic. A helical transmembrane segment spans residues 150-170 (FMAFIAAGNIILEYVVGGAAV). The Extracellular portion of the chain corresponds to 171 to 201 (ARSWTSYFATLLNHKPEDFRIIVHKLGEDYS). Residues 202–222 (HLDPIAVGVCAIICVLAVVGT) form a helical membrane-spanning segment. Topologically, residues 223–227 (KGSSR) are cytoplasmic. A helical membrane pass occupies residues 228 to 248 (FNYIASIIHMVVILFVIIAGF). Over 249 to 266 (TKADVKNYSDFTPYGVRG) the chain is Extracellular. Asn-255 carries N-linked (GlcNAc...) asparagine glycosylation. A helical membrane pass occupies residues 267–287 (VFKSAAVLFFAYIGFDAVSTM). Residues 288–297 (AEETKNPGRD) are Cytoplasmic-facing. A helical transmembrane segment spans residues 298–318 (IPIGLVGSMVVTTVCYCLMAV). Residues 319-348 (TLCLMQPYQQIDPDAPFSVAFSAVGWDWAK) lie on the Extracellular side of the membrane. Residues 349–369 (YIVAFGALKGMTTVLLVGAIG) form a helical membrane-spanning segment. Residues 370–393 (QARYMTHIARAHMMPPWLAQVNAK) are Cytoplasmic-facing. The helical transmembrane segment at 394–414 (TGTPINATVVMLAATALIAFF) threads the bilayer. Topologically, residues 415 to 418 (TKLK) are extracellular. Residues 419–439 (ILADLLSVSTLFIFMFVAVAL) form a helical membrane-spanning segment. Over 440-457 (LVRRYYVTGETSTRDRNK) the chain is Cytoplasmic. Residues 458–478 (FLVFLGLILASSTATAVYWAL) form a helical membrane-spanning segment. The Extracellular portion of the chain corresponds to 479–483 (EEEGW). A helical membrane pass occupies residues 484–504 (IGYCITVPIWFLSTVAMKFLV). At 505–511 (PQARAPK) the chain is on the cytoplasmic side. The helical transmembrane segment at 512 to 532 (IWGVPLVPWLPSASIAINIFL) threads the bilayer. The Extracellular portion of the chain corresponds to 533 to 543 (LGSIDTKSFVR). The chain crosses the membrane as a helical span at residues 544-564 (FAIWTGILLIYYVLFGLHATY). Topologically, residues 565–594 (DTAKATLKEKQALQKAEEGGVVADNSCSAT) are cytoplasmic.

This sequence belongs to the amino acid-polyamine-organocation (APC) superfamily. Cationic amino acid transporter (CAT) (TC 2.A.3.3) family. In terms of tissue distribution, expressed in roots, stems, flowers, petioles, seeds, siliques, and leaves. Mostly present in major veins.

The protein localises to the membrane. Its activity is regulated as follows. Inhibited by the protonophore 2,4-dinitrophenol. Functionally, high-affinity permease involved in the transport of the cationic amino acids (e.g. arginine, lysine, histidine, citrulline, valine, and glutamate). Transport mostly basic amino acids, and, to a lower extent neutral and acidic amino acids. May function as a proton symporter. The sequence is that of Cationic amino acid transporter 1 (CAT1) from Arabidopsis thaliana (Mouse-ear cress).